A 55-amino-acid polypeptide reads, in one-letter code: Photosystem II reaction center protein K (55 aa).

A propeptide spanning residues 1-18 (MFYIHLENTFDLSSTILV) is cleaved from the precursor. The chain crosses the membrane as a helical span at residues 26 to 46 (IFDPIVDVMPIIPLFFFLLAF).

The protein belongs to the PsbK family. In terms of assembly, PSII is composed of 1 copy each of membrane proteins PsbA, PsbB, PsbC, PsbD, PsbE, PsbF, PsbH, PsbI, PsbJ, PsbK, PsbL, PsbM, PsbT, PsbX, PsbY, PsbZ, Psb30/Ycf12, at least 3 peripheral proteins of the oxygen-evolving complex and a large number of cofactors. It forms dimeric complexes.

It localises to the plastid. Its subcellular location is the chloroplast thylakoid membrane. One of the components of the core complex of photosystem II (PSII). PSII is a light-driven water:plastoquinone oxidoreductase that uses light energy to abstract electrons from H(2)O, generating O(2) and a proton gradient subsequently used for ATP formation. It consists of a core antenna complex that captures photons, and an electron transfer chain that converts photonic excitation into a charge separation. In Anthoceros angustus (Hornwort), this protein is Photosystem II reaction center protein K.